The primary structure comprises 95 residues: Histone-like DNA-binding protein (95 aa).

Belongs to the bacterial histone-like protein family.

This is Histone-like DNA-binding protein from Rickettsia montanensis.